A 159-amino-acid polypeptide reads, in one-letter code: Ribosomal RNA large subunit methyltransferase H (159 aa).

S-adenosyl-L-methionine-binding positions include Leu-76, Gly-108, and 127–132 (FSPMTF).

The protein belongs to the RNA methyltransferase RlmH family. As to quaternary structure, homodimer.

It is found in the cytoplasm. It carries out the reaction pseudouridine(1915) in 23S rRNA + S-adenosyl-L-methionine = N(3)-methylpseudouridine(1915) in 23S rRNA + S-adenosyl-L-homocysteine + H(+). Specifically methylates the pseudouridine at position 1915 (m3Psi1915) in 23S rRNA. The protein is Ribosomal RNA large subunit methyltransferase H of Alkaliphilus metalliredigens (strain QYMF).